The sequence spans 156 residues: Large ribosomal subunit protein uL30 (156 aa).

Belongs to the universal ribosomal protein uL30 family. Part of the 50S ribosomal subunit.

This chain is Large ribosomal subunit protein uL30, found in Thermofilum pendens (strain DSM 2475 / Hrk 5).